Reading from the N-terminus, the 412-residue chain is tRNA pseudouridine synthase Pus10 (412 aa).

The THUMP domain occupies 73 to 197 (HEPSIKFLSN…TGSVEVQIMP (125 aa)). Substrate-binding residues include Y308 and Y376.

This sequence belongs to the pseudouridine synthase Pus10 family.

The catalysed reaction is uridine(54) in tRNA = pseudouridine(54) in tRNA. It catalyses the reaction uridine(55) in tRNA = pseudouridine(55) in tRNA. Its function is as follows. Responsible for synthesis of pseudouridine from uracil-54 and uracil-55 in the psi GC loop of transfer RNAs. The chain is tRNA pseudouridine synthase Pus10 from Vulcanisaeta distributa (strain DSM 14429 / JCM 11212 / NBRC 100878 / IC-017).